The chain runs to 250 residues: NADH-quinone oxidoreductase subunit C (250 aa).

The protein belongs to the complex I 30 kDa subunit family. As to quaternary structure, NDH-1 is composed of 14 different subunits. Subunits NuoB, C, D, E, F, and G constitute the peripheral sector of the complex.

It is found in the cell inner membrane. The enzyme catalyses a quinone + NADH + 5 H(+)(in) = a quinol + NAD(+) + 4 H(+)(out). NDH-1 shuttles electrons from NADH, via FMN and iron-sulfur (Fe-S) centers, to quinones in the respiratory chain. The immediate electron acceptor for the enzyme in this species is believed to be ubiquinone. Couples the redox reaction to proton translocation (for every two electrons transferred, four hydrogen ions are translocated across the cytoplasmic membrane), and thus conserves the redox energy in a proton gradient. In Xanthomonas oryzae pv. oryzae (strain PXO99A), this protein is NADH-quinone oxidoreductase subunit C.